We begin with the raw amino-acid sequence, 163 residues long: Endoribonuclease YbeY (163 aa).

The Zn(2+) site is built by histidine 116, histidine 120, and histidine 126.

Belongs to the endoribonuclease YbeY family. Requires Zn(2+) as cofactor.

The protein localises to the cytoplasm. Its function is as follows. Single strand-specific metallo-endoribonuclease involved in late-stage 70S ribosome quality control and in maturation of the 3' terminus of the 16S rRNA. This chain is Endoribonuclease YbeY, found in Idiomarina loihiensis (strain ATCC BAA-735 / DSM 15497 / L2-TR).